The primary structure comprises 182 residues: Lipid A acyltransferase PagP (182 aa).

A signal peptide spans 1–21 (MTQYFRALAFFLLLVPATAMA). Cys22 carries N-palmitoyl cysteine lipidation. The S-diacylglycerol cysteine moiety is linked to residue Cys22. Catalysis depends on residues His55, Asp98, and Ser99.

It belongs to the lipid A palmitoyltransferase family. As to quaternary structure, homodimer.

Its subcellular location is the cell outer membrane. It catalyses the reaction a lipid A + a 1,2-diacyl-sn-glycero-3-phosphocholine = a hepta-acyl lipid A + a 2-acyl-sn-glycero-3-phosphocholine. The catalysed reaction is a lipid IVA + a 1,2-diacyl-sn-glycero-3-phosphocholine = a lipid IVB + a 2-acyl-sn-glycero-3-phosphocholine. The enzyme catalyses a lipid IIA + a 1,2-diacyl-sn-glycero-3-phosphocholine = a lipid IIB + a 2-acyl-sn-glycero-3-phosphocholine. Transfers a fatty acid residue from the sn-1 position of a phospholipid to the N-linked hydroxyfatty acid chain on the proximal unit of lipid A or its precursors. Required for resistance to cationic antimicrobial peptides (CAMPs). Modifications of lipid A with an acyl chain to evade host immune defenses by resisting antibody-mediated complement lysis during respiratory infection. This chain is Lipid A acyltransferase PagP, found in Bordetella bronchiseptica (strain ATCC BAA-588 / NCTC 13252 / RB50) (Alcaligenes bronchisepticus).